The following is a 996-amino-acid chain: Sarcoplasmic/endoplasmic reticulum calcium ATPase 1 (996 aa).

Over 1 to 48 (MENAHTKSPAECLSYFGVNEHTGLSPDQFKKNLDKFGYNELPAEEGKS) the chain is Cytoplasmic. Residues 49–69 (IWDLIVEQFEDLLVRILLLAA) traverse the membrane as a helical segment. Residues 70–89 (CISFVLAWFEEGEETITAFV) are Lumenal-facing. Residues 90-110 (EPFVILLILIANAIVGVWQER) traverse the membrane as a helical segment. Residues 111–253 (NAEDAIEALK…QEKTPLQAKL (143 aa)) are Cytoplasmic-facing. Residues 254–273 (DEFGEQLSKVISLICVAVWA) form a helical membrane-spanning segment. Residues 274 to 295 (INIGHFNDPVHGGSWIRGAVYY) lie on the Lumenal side of the membrane. The chain crosses the membrane as a helical span at residues 296–313 (FKIAVALAVAAIPEGLPA). Positions 304, 305, 307, and 309 each coordinate Ca(2+). Residues 314-754 (VITTCLALGT…EEGRAIYNNM (441 aa)) lie on the Cytoplasmic side of the membrane. Residue Asp-351 is the 4-aspartylphosphate intermediate of the active site. Mg(2+)-binding residues include Asp-351 and Thr-353. The ATP site is built by Thr-353, Glu-442, Arg-489, Lys-512, Arg-557, Thr-622, Gly-623, Asp-624, Arg-675, and Lys-681. Asp-700 is a binding site for Mg(2+). Asn-703 contributes to the ATP binding site. A helical membrane pass occupies residues 755-774 (KQFIRYLISSNVGEVVCIFL). Asn-765 and Glu-768 together coordinate Ca(2+). The Lumenal portion of the chain corresponds to 775 to 784 (TAALGLPEAL). The chain crosses the membrane as a helical span at residues 785–805 (IPVQLLWVNLVTDGLPATALG). The interaction with PLN stretch occupies residues 785 to 805 (IPVQLLWVNLVTDGLPATALG). Ca(2+) contacts are provided by Asn-793, Thr-796, and Asp-797. Topologically, residues 806–825 (FNPPDLDIMGKPPRSPKEPL) are cytoplasmic. Residues 826-848 (ISGWLFFRYMAIGGYVGAATVGG) form a helical membrane-spanning segment. At 849 to 894 (AAWWFLYDSTGPAVTYYQLSHFMQCHNHNEDFTGVDCDIFEASPPM) the chain is on the lumenal side. Cys-873 and Cys-885 are joined by a disulfide. Residues 895-914 (TMALSVLVTIEMCNALNSLS) traverse the membrane as a helical segment. Glu-905 is a Ca(2+) binding site. Over 915–927 (ENQSLIRMPPWSN) the chain is Cytoplasmic. A helical membrane pass occupies residues 928-946 (LWLMAAMTLSMSLHFMIIY). Residues 929-940 (WLMAAMTLSMSL) are interaction with PLN. The Lumenal portion of the chain corresponds to 947-961 (VDPLPMIFKLTHLTF). Residues 962 to 982 (DQWLMVFKLSFPVILIDEVLK) traverse the membrane as a helical segment. Residues 983 to 996 (FFARNYIETGKEVK) lie on the Cytoplasmic side of the membrane.

This sequence belongs to the cation transport ATPase (P-type) (TC 3.A.3) family. Type IIA subfamily. Interacts with sarcolipin (SLN). Interacts with phospholamban (PLN). Interacts with myoregulin (MRLN). Interacts with DWORF. It depends on Mg(2+) as a cofactor.

The protein localises to the endoplasmic reticulum membrane. Its subcellular location is the sarcoplasmic reticulum membrane. The enzyme catalyses Ca(2+)(in) + ATP + H2O = Ca(2+)(out) + ADP + phosphate + H(+). Its activity is regulated as follows. Inhibited by sarcolipin (SLN) and myoregulin (MRLN). Also shown to be inhibited by phospholamban (PLN) in vitro. Enhanced by DWORF; DWORF increases activity by displacing sarcolipin (SLN), phospholamban (PLN) and myoregulin (MRLN). In terms of biological role, key regulator of striated muscle performance by acting as the major Ca(2+) ATPase responsible for the reuptake of cytosolic Ca(2+) into the sarcoplasmic reticulum. Catalyzes the hydrolysis of ATP coupled with the translocation of calcium from the cytosol to the sarcoplasmic reticulum lumen. Contributes to calcium sequestration involved in muscular excitation/contraction. The chain is Sarcoplasmic/endoplasmic reticulum calcium ATPase 1 (atp2a1) from Makaira nigricans (Atlantic blue marlin).